A 67-amino-acid chain; its full sequence is Colostrum trypsin inhibitor (67 aa).

The 51-residue stretch at Cys8 to Cys58 folds into the BPTI/Kunitz inhibitor domain. Intrachain disulfides connect Cys8–Cys58, Cys17–Cys41, and Cys33–Cys54. Asn27 carries N-linked (GlcNAc...) asparagine glycosylation.

The protein localises to the secreted. In Bos taurus (Bovine), this protein is Colostrum trypsin inhibitor.